We begin with the raw amino-acid sequence, 2020 residues long: MNSMNTYSPLYSSYENINIYKKNRKFEEDNYETSTANISCDSKGRILVKESENDRNESIQKKQMLSSMDNRKTNKSEKHNISSYYKMRKKASNHLKDKEKLNNNIIYAKNPHANRYDKYYSLNMNIMNNMNNMNNMNNVNNMNNVNNMNNVNNMNNMNNVNNMNNMNNVNNMNNVKSMYNNNNNSNVYYRISRQNINGKERLLNRYNIMRPQRSADMLIRNYLYNDLPYEINQQNLNKNINDNNAGSFDNLNKTVFENYNKNILDEYNRNIMQYYNSNLKNYRNSSFDNIYTRYNNNNNNNNVYSNNNVYSNNNIYNNNNNNDNINNSFQFSKQEGLMKIYSNNNRNMNDYVVKTSNITRAADNTCAQEQINIPTYNKTVLLKSSPNTENTFNKTLSNILKEQPKRSSMFSFNSSDFFKDFGKLRKNFVGKKKNKINKDIVINGNIFNNKIIDNNTSNAKSEGNSTLHKIYNFIFPSSVKKLQKKKQKLQVIEDKEKNSNRAVVMPLKNKIIYINDANITNDKFKHSFENYNYHQTNIPFVSVTNYMNKDSTKNVRSFSSFDVKERISPRVIRNGNINNNKNNNINNNNNNINNNNNNINNNNNNINNNNNINNNNNINNNNNINNNNNINNNNINNINNINNDFVNDSNINKTVNIHNNNNNLNNYSNTMKSVAKNTQKLSAQKNSLVNDKHHTYHEKLITNIYQFTGGQSQKSCNIKNQNVKEEKINNTQISYINNTAYNDYTNLPNVETYVLSEKSNNLENKEDNNINEKFKNDNNVDKKNNDENNIIKHNVNQNNNEVIVMNNQTEEQINDNKFIKPLNNITGIDPKKKNIYNTVMHINDKMDLNKHDYNYNYNNIIPHNYINSSDKMTNNSLHINKKADDIFQNMISNNDTNVPCVYVNKYINNIFQNNNPSNVTNYINTINMNKAPITIDENSNKLDNNINYENVTKNMIYNNYTNNNVLYITKEKSDNKLNNSTNHLNDLKNNYYVINPSLLYIHNNNNNIEWNKQYTNNFSKPNFLDKFFYEKKVESIQPHHLNQYYYNNQNVKYNPSHINILENKYVNQFTNQNENSLYNFTTHHNNIKNNNIDNILLLDKAIRNQSIYYNNNKGDDETKSAEHTTNPSINLLKNNYEDKNKSNYVHSIVSITDKDNSIYAKNKYAEVVTKNNEKREDAIHKKDEQYIFNNNDNNNDNIHNNNIHNNIHNNIHNNIHNNIHNNIHNNIHNNIHNNIHNNIHNNIHNNIDVSSRENFFQHDIQNTNQINNKTILDITQNEKPNATNEKCLDINNKEKKKKKIKSVHYDMDEILSLKCKVYDELDTCLKCINNLTKNKKLYEQLKKYKHKLDKDTKTKKLYDECTSEKTGSYYTMKDSYISSLLCNEYKLNHILNKSNNKVSDDKHILSYNHHHNKNNNINDINNIKHISKFVNKDNEKTLNNINILNHNNKDPNSGVFLPSDNTESVIYNMNRNRKLCDNNFNVSKHVLYKDSKGTDSTRTNFYDDYSMSYVKSNVDNVEKKEKIKNNINISDKYFLSETDSPYIGKKKALMITLNYNGLLEGCVNDTVDMCDHLMQRFGFNDFILLNDCNLCYRNFVTQKANKKNILSNLHNFIVNSNNGDILFFYFCGYSIKLIDSKFTENYNFALLPQDHSKNNYIYSNEIFNIIKKLQGGKQLCIIFDTTYTSYFVPVPTSITYNKNMNTTEIYKYNNFSSNQKYLKSLKTFGKIRDRNVDSIFVENIKKPLLYEIYKKENDTNTNDKIILVPSIFFFSPDCNDRNDFEFSIKNKVRGLLTYCLGKAIELLKNDFSYHDLFVAASQILIDIKKEYNLKYVKFKLSFLNEYSPDDIKFLSHESLFLKKKLQLDEPLWKPSLKLNNLNQYIQDICNMDERKMLKSSKKKCLLIFIKDIKFYTYKNIDTKNEYFVSCFIKNKNVNILCVRRNNTKEQRIVQDKIFFLEYITLNVTHMENANIYVELFKKKKKNYFVARSIFNIRNVNGKFSLSDEKKNIIGIIDLNIKCVS.

Basic and acidic residues-rich tracts occupy residues 51–60 (SENDRNESIQ) and 69–78 (DNRKTNKSEK). 2 disordered regions span residues 51–78 (SEND…KSEK) and 573–614 (RNGN…NINN). A compositionally biased stretch (low complexity) spans 576-614 (NINNNKNNNINNNNNNINNNNNNINNNNNNINNNNNINN).

This sequence belongs to the peptidase C14B family.

It localises to the cytoplasm. Ca(2+) does not appear to affect catalytic activity. Its function is as follows. Protease that cleaves specifically after arginine or lysine residues. May play a role in parasite growth and/or development. This Plasmodium falciparum (isolate 3D7) protein is Metacaspase-2.